We begin with the raw amino-acid sequence, 236 residues long: UPF0257 lipoprotein YnfC (236 aa).

Positions M1–G16 are cleaved as a signal peptide. Residue C17 is the site of N-palmitoyl cysteine attachment. C17 is lipidated: S-diacylglycerol cysteine.

This sequence belongs to the UPF0257 family.

The protein resides in the cell membrane. The chain is UPF0257 lipoprotein YnfC from Salmonella schwarzengrund (strain CVM19633).